The following is a 544-amino-acid chain: CTP synthase (544 aa).

The interval Met1–Leu267 is amidoligase domain. Ser13 contacts CTP. Ser13 is a UTP binding site. Residue Ser14 to Ile19 participates in ATP binding. L-glutamine is bound at residue Tyr54. ATP is bound at residue Asp71. Residues Asp71 and Glu141 each contribute to the Mg(2+) site. CTP-binding positions include Asp148–Glu150, Lys188–Gln193, and Lys224. UTP contacts are provided by residues Lys188 to Gln193 and Lys224. The region spanning Tyr299–Asp534 is the Glutamine amidotransferase type-1 domain. Gly354 lines the L-glutamine pocket. The active-site Nucleophile; for glutamine hydrolysis is the Cys381. L-glutamine contacts are provided by residues Leu382–Gln385, Glu405, and Arg462. Catalysis depends on residues His507 and Glu509.

The protein belongs to the CTP synthase family. Homotetramer.

The catalysed reaction is UTP + L-glutamine + ATP + H2O = CTP + L-glutamate + ADP + phosphate + 2 H(+). The enzyme catalyses L-glutamine + H2O = L-glutamate + NH4(+). It catalyses the reaction UTP + NH4(+) + ATP = CTP + ADP + phosphate + 2 H(+). The protein operates within pyrimidine metabolism; CTP biosynthesis via de novo pathway; CTP from UDP: step 2/2. Its activity is regulated as follows. Allosterically activated by GTP, when glutamine is the substrate; GTP has no effect on the reaction when ammonia is the substrate. The allosteric effector GTP functions by stabilizing the protein conformation that binds the tetrahedral intermediate(s) formed during glutamine hydrolysis. Inhibited by the product CTP, via allosteric rather than competitive inhibition. In terms of biological role, catalyzes the ATP-dependent amination of UTP to CTP with either L-glutamine or ammonia as the source of nitrogen. Regulates intracellular CTP levels through interactions with the four ribonucleotide triphosphates. In Dehalococcoides mccartyi (strain ATCC BAA-2266 / KCTC 15142 / 195) (Dehalococcoides ethenogenes (strain 195)), this protein is CTP synthase.